The sequence spans 96 residues: (4S)-4-hydroxy-5-phosphonooxypentane-2,3-dione isomerase (96 aa).

The 90-residue stretch at 2-91 folds into the ABM domain; that stretch reads HVTLVEINVK…MTGPRKKTTF (90 aa).

It belongs to the LsrG family. As to quaternary structure, homodimer.

The protein resides in the cytoplasm. It carries out the reaction (2S)-2-hydroxy-3,4-dioxopentyl phosphate = 3-hydroxy-2,4-dioxopentyl phosphate. Functionally, involved in the degradation of phospho-AI-2, thereby terminating induction of the lsr operon and closing the AI-2 signaling cycle. Catalyzes the conversion of (4S)-4-hydroxy-5-phosphonooxypentane-2,3-dione (P-DPD) to 3-hydroxy-5-phosphonooxypentane-2,4-dione (P-HPD). This is (4S)-4-hydroxy-5-phosphonooxypentane-2,3-dione isomerase from Yersinia enterocolitica serotype O:8 / biotype 1B (strain NCTC 13174 / 8081).